The chain runs to 918 residues: Non-lysosomal glucosylceramidase (918 aa).

The interval 886–918 (HKKSRRPSVTQGTGLSTQPECGPKRSLANLNSE) is disordered. Residues 892 to 904 (PSVTQGTGLSTQP) show a composition bias toward polar residues. At Ser893 the chain carries Phosphoserine.

Belongs to the non-lysosomal glucosylceramidase family. As to expression, widely expressed at low level. Highly expressed in testis and brain. Ubiquitously expressed in the brain (at protein level). Expressed by Sertoli cells (at protein level).

Its subcellular location is the endoplasmic reticulum membrane. The protein resides in the golgi apparatus membrane. The catalysed reaction is a beta-D-glucosyl-(1&lt;-&gt;1')-N-acylsphing-4-enine + H2O = an N-acylsphing-4-enine + D-glucose. It catalyses the reaction a beta-D-galactosyl-(1&lt;-&gt;1')-N-acylsphing-4-enine + H2O = an N-acylsphing-4-enine + D-galactose. The enzyme catalyses beta-D-glucosyl-(1-&gt;3)-O-lithocholate + H2O = lithocholate + D-glucose. It carries out the reaction beta-D-glucosyl-(1-&gt;3)-O-chenodeoxycholate + H2O = chenodeoxycholate + D-glucose. The catalysed reaction is a di-trans,poly-cis-dolichyl beta-D-glucosyl phosphate + chenodeoxycholate = beta-D-glucosyl-(1-&gt;3)-O-chenodeoxycholate + a di-trans,poly-cis-dolichyl phosphate + H(+). It catalyses the reaction octyl beta-D-glucose + chenodeoxycholate = beta-D-glucosyl-(1-&gt;3)-O-chenodeoxycholate + octan-1-ol. The enzyme catalyses cholesteryl 3-beta-D-glucoside + H2O = cholesterol + D-glucose. It carries out the reaction a beta-D-glucosyl-(1&lt;-&gt;1')-N-acylsphing-4-enine + cholesterol = cholesteryl 3-beta-D-glucoside + an N-acylsphing-4-enine. The catalysed reaction is beta-D-glucosyl-N-(9Z-octadecenoyl)-sphing-4E-enine + cholesterol = N-(9Z-octadecenoyl)-sphing-4-enine + cholesteryl 3-beta-D-glucoside. It catalyses the reaction a beta-D-galactosyl-(1&lt;-&gt;1')-N-acylsphing-4-enine + cholesterol = cholesteryl 3-beta-D-galactoside + an N-acylsphing-4-enine. The enzyme catalyses 1-(beta-D-galactosyl)-N-dodecanoylsphing-4-enine + cholesterol = cholesteryl 3-beta-D-galactoside + N-dodecanoylsphing-4-enine. The protein operates within lipid metabolism; sphingolipid metabolism. It functions in the pathway steroid metabolism; cholesterol metabolism. With respect to regulation, enzymatic activity is dependent on membrane association and requires the presence of lipids. Inhibited by N-(adamantanemethyloxypentyl)-deoxynojirimycin/AMP-DNM. Inhibited by its product sphingosine/N-acylsphing-4-enine in a feedback loop. Also inhibited by other non-acetylated sphingoid bases and their derivatives but not by sphingosine-1-phosphate and complex sphingolipids. Non-lysosomal glucosylceramidase that catalyzes the hydrolysis of glucosylceramides/GlcCers (such as beta-D-glucosyl-(1&lt;-&gt;1')-N-acylsphing-4-enine) to free glucose and ceramides (such as N-acylsphing-4-enine). GlcCers are membrane glycosphingolipids that have a wide intracellular distribution. They are the main precursors of more complex glycosphingolipids that play a role in cellular growth, differentiation, adhesion, signaling, cytoskeletal dynamics and membrane properties. Also involved in the transglucosylation of cholesterol, transferring glucose from GlcCer, thereby modifying its water solubility and biological properties. Under specific conditions, may catalyze the reverse reaction, transferring glucose from cholesteryl-3-beta-D-glucoside to ceramide (such as N-acylsphing-4-enine). May play a role in the metabolism of bile acids. Able to hydrolyze bile acid 3-O-glucosides as well as to produce bile acid-glucose conjugates thanks to a bile acid glucosyl transferase activity. Catalyzes the hydrolysis of galactosylceramides/GalCers (such as beta-D-galactosyl-(1&lt;-&gt;1')-N-acylsphing-4-enine), as well as galactosyl transfer between GalCers and cholesterol in vitro with lower activity compared with their activity against GlcCers. The protein is Non-lysosomal glucosylceramidase of Mus musculus (Mouse).